A 564-amino-acid polypeptide reads, in one-letter code: Proline--tRNA ligase (564 aa).

This sequence belongs to the class-II aminoacyl-tRNA synthetase family. ProS type 1 subfamily. As to quaternary structure, homodimer.

Its subcellular location is the cytoplasm. It catalyses the reaction tRNA(Pro) + L-proline + ATP = L-prolyl-tRNA(Pro) + AMP + diphosphate. Functionally, catalyzes the attachment of proline to tRNA(Pro) in a two-step reaction: proline is first activated by ATP to form Pro-AMP and then transferred to the acceptor end of tRNA(Pro). As ProRS can inadvertently accommodate and process non-cognate amino acids such as alanine and cysteine, to avoid such errors it has two additional distinct editing activities against alanine. One activity is designated as 'pretransfer' editing and involves the tRNA(Pro)-independent hydrolysis of activated Ala-AMP. The other activity is designated 'posttransfer' editing and involves deacylation of mischarged Ala-tRNA(Pro). The misacylated Cys-tRNA(Pro) is not edited by ProRS. The sequence is that of Proline--tRNA ligase from Bacillus subtilis (strain 168).